A 347-amino-acid polypeptide reads, in one-letter code: Protein YIPF3 (347 aa).

The disordered stretch occupies residues 1 to 31 (MATPAAPASGVRNGAGPEWGGFEENIQGGGS). Ala-2 carries the N-acetylalanine; in Protein YIPF3, N-terminally processed modification. Residues 2–145 (ATPAAPASGV…PIKMVNFPQK (144 aa)) are Cytoplasmic-facing. A helical transmembrane segment spans residues 146–166 (VAGELYGPLMLVFTLVAILLH). Over 167–184 (GMKTSDTIIREGTLMGTA) the chain is Lumenal. Residues 185–205 (IGTCFGYWLGVSSFIYFLAYL) traverse the membrane as a helical segment. Over 206–211 (CNAQIT) the chain is Cytoplasmic. Residues 212–234 (MLQMLALLGYGLFGHCIVLFITY) traverse the membrane as a helical segment. The Lumenal portion of the chain corresponds to 235-237 (NIH). Residues 238–260 (LHALFYLFWLLVGGLSTLRMVAV) traverse the membrane as a helical segment. Topologically, residues 261–271 (LVSRTVGPTQR) are cytoplasmic. Residues 272-292 (LLLCGTLAALHMLFLLYLHFA) traverse the membrane as a helical segment. The Lumenal portion of the chain corresponds to 293–347 (YHKVVEGILDTLEGPNIPPMQRVPRDIPAVLPAARLPVAVINATAKAIAVTLQSH). Asn-334 is a glycosylation site (N-linked (GlcNAc...) asparagine).

The protein belongs to the YIP1 family. As to quaternary structure, interacts with YIPF4 and YIPF5. In terms of tissue distribution, expressed by splenocytes (at protein level).

The protein resides in the cell membrane. Its subcellular location is the golgi apparatus. The protein localises to the cis-Golgi network membrane. It localises to the cytoplasm. In terms of biological role, involved in the maintenance of the Golgi structure. May play a role in hematopoiesis. This is Protein YIPF3 (Yipf3) from Mus musculus (Mouse).